Consider the following 589-residue polypeptide: Peroxisomal biogenesis factor 8 (589 aa).

A Microbody targeting signal motif is present at residues 587 to 589; that stretch reads SKL.

The protein localises to the peroxisome matrix. Its function is as follows. Required for peroxisome assembly. The chain is Peroxisomal biogenesis factor 8 (PEX8) from Saccharomyces cerevisiae (strain ATCC 204508 / S288c) (Baker's yeast).